The following is a 1724-amino-acid chain: Protein mono-ADP-ribosyltransferase PARP4 (1724 aa).

The BRCT domain occupies 1 to 94 (MVMGIFANCI…RLLDVKNYDP (94 aa)). A Nuclear localization signal motif is present at residues 19–25 (PQQQKKK). A disordered region spans residues 97–123 (PLDITPPPDQKASSSEVKTEGLCPDSA). 2 positions are modified to phosphothreonine: Thr101 and Thr333. Positions 242-370 (SEQLQALLLE…ETNLSKPNPP (129 aa)) constitute a PARP alpha-helical domain. A PARP catalytic domain is found at 369–573 (PPSLAKYRAL…FSMPGDQIKD (205 aa)). The VIT domain maps to 607 to 735 (SSTKAGLQDA…KVLIKITYIT (129 aa)). The VWFA domain maps to 876–1046 (EVIICLDCSS…KQIEDQMTRL (171 aa)). Position 1236 is a phosphoserine (Ser1236). The Nuclear localization signal motif lies at 1237-1249 (KRKHRKIPFSKRK). Ser1335 is modified (phosphoserine). Residues 1408 to 1452 (SAQSAPLQHPGGFTTRPSAGTFPELDSPQLHFSLPTDPDPIRGFG) are disordered. Asymmetric dimethylarginine is present on Arg1476. Residue Ser1504 is modified to Phosphoserine. The interaction with the major vault protein stretch occupies residues 1562–1724 (VCIQHWQDAV…LHRVLHYSQG (163 aa)).

Belongs to the ARTD/PARP family. In terms of assembly, component of the vault ribonucleoprotein particle, at least composed of MVP, PARP4 and one or more vault RNAs (vRNAs). Interacts with TEP1. In terms of tissue distribution, widely expressed; the highest levels are in the kidney; also detected in heart, placenta, lung, liver, skeletal muscle, spleen, leukocytes and pancreas.

It localises to the cytoplasm. The protein resides in the nucleus. The protein localises to the cytoskeleton. It is found in the spindle. It catalyses the reaction L-aspartyl-[protein] + NAD(+) = 4-O-(ADP-D-ribosyl)-L-aspartyl-[protein] + nicotinamide. The catalysed reaction is L-glutamyl-[protein] + NAD(+) = 5-O-(ADP-D-ribosyl)-L-glutamyl-[protein] + nicotinamide. In terms of biological role, mono-ADP-ribosyltransferase that mediates mono-ADP-ribosylation of target proteins. The protein is Protein mono-ADP-ribosyltransferase PARP4 of Homo sapiens (Human).